A 452-amino-acid polypeptide reads, in one-letter code: GTPase Obg (452 aa).

The region spanning 1–158 is the Obg domain; that stretch reads MFIDRAKIYV…KWIVLELKVM (158 aa). Disordered stretches follow at residues 66–87 and 117–143; these read GKRG…DKVI and AEGG…SEDG. Residues 159-338 form the OBG-type G domain; it reads AEVGLIGYPN…LLDFVAEKVA (180 aa). Residues 165 to 172, 190 to 194, 212 to 215, 282 to 285, and 319 to 321 contribute to the GTP site; these read GYPNVGKS, FTTLN, DIPG, NKMD, and SAA. Residues Ser172 and Thr192 each coordinate Mg(2+). Residues 376-452 form the OCT domain; it reads IEEKPKSDFG…KIGNVEFEYQ (77 aa).

It belongs to the TRAFAC class OBG-HflX-like GTPase superfamily. OBG GTPase family. Monomer. Mg(2+) is required as a cofactor.

It localises to the cytoplasm. An essential GTPase which binds GTP, GDP and possibly (p)ppGpp with moderate affinity, with high nucleotide exchange rates and a fairly low GTP hydrolysis rate. Plays a role in control of the cell cycle, stress response, ribosome biogenesis and in those bacteria that undergo differentiation, in morphogenesis control. The polypeptide is GTPase Obg (Natranaerobius thermophilus (strain ATCC BAA-1301 / DSM 18059 / JW/NM-WN-LF)).